Reading from the N-terminus, the 296-residue chain is Myeloid differentiation primary response protein MyD88 (296 aa).

The Death domain maps to Met54 to Ile109. Positions Glu110–Gly155 are intermediate domain. The region spanning Glu159–Leu293 is the TIR domain. Ser244 bears the Phosphoserine mark.

Homodimer. Also forms heterodimers with TIRAP. Binds to TLR2, TLR5, IRAK1, IRAK2 and IRAK4 via their respective TIR domains. Interacts with IL18R1. Interacts with BMX, IL1RL1, IKBKE and IRF7. Interacts with LRRFIP1 and LRRFIP2; this interaction positively regulates Toll-like receptor (TLR) signaling in response to agonist. Interacts with FLII. LRRFIP1 and LRRFIP2 compete with FLII for MYD88-binding. Interacts with IRF1. Upon IL1B treatment, forms a complex with PELI1, IRAK1, IRAK4 and TRAF6; this complex recruits MAP3K7/TAK1, TAB1 and TAB2 to mediate NF-kappa-B activation. Direct binding of SMAD6 to PELI1 prevents the complex formation and hence negatively regulates IL1R-TLR signaling and eventually NF-kappa-B-mediated gene expression. May interact with PIK3AP1. Interacts (via TIR domain) with DHX9 (via H2A and OB-fold regions); this interaction is direct. Interacts with OTUD4 deubiquitinase; the interaction is direct. Interacts with TLR4. In terms of assembly, (Microbial infection) In case of infection, interacts with uropathogenic E.coli protein TcpC; suppressing Toll-like receptor (TLR)-mediated cytokine production. As to quaternary structure, (Microbial infection) In case of infection, interacts with uropathogenic E.faecalis protein TcpF; suppressing Toll-like receptor (TLR)-mediated cytokine production. (Microbial infection) In case of infection, interacts with B.melitensis protein TcpB. In terms of assembly, (Microbial infection) Interacts with human metapneumovirus protein M2-2; this interaction prevents MYD88-mediated cytokine secretion. Post-translationally, ubiquitinated; undergoes 'Lys-63'-linked polyubiquitination. OTUD4 specifically hydrolyzes 'Lys-63'-linked polyubiquitinated MYD88. Deubiquitinated by USP3 that cleaves 'Lys-63'-linked ubiquitin chains leading to inhibition of MYD88-induced NF-kappa-B signaling. In terms of processing, (Microbial infection) Ubiquitinated by human herpesvirus 8 (KSHV) protein RTA/ORF50, leading to proteasomal degradation ans suppression of TLR4 signaling pathway. Ubiquitous.

The protein localises to the cytoplasm. It localises to the nucleus. Adapter protein involved in the Toll-like receptor and IL-1 receptor signaling pathway in the innate immune response. Acts via IRAK1, IRAK2, IRF7 and TRAF6, leading to NF-kappa-B activation, cytokine secretion and the inflammatory response. Increases IL-8 transcription. Involved in IL-18-mediated signaling pathway. Activates IRF1 resulting in its rapid migration into the nucleus to mediate an efficient induction of IFN-beta, NOS2/INOS, and IL12A genes. Upon TLR8 activation by GU-rich single-stranded RNA (GU-rich RNA) derived from viruses such as SARS-CoV-2, SARS-CoV and HIV-1, induces IL1B release through NLRP3 inflammasome activation. MyD88-mediated signaling in intestinal epithelial cells is crucial for maintenance of gut homeostasis and controls the expression of the antimicrobial lectin REG3G in the small intestine. In Homo sapiens (Human), this protein is Myeloid differentiation primary response protein MyD88.